Consider the following 98-residue polypeptide: uncharacterized protein (98 aa).

It belongs to the IS150/IS1296 orfA family.

This is an uncharacterized protein from Haemophilus influenzae (strain ATCC 51907 / DSM 11121 / KW20 / Rd).